Consider the following 519-residue polypeptide: Berghepain-1 (519 aa).

At 1 to 32 the chain is on the cytoplasmic side; the sequence is MINDIRRINITTSSIESLNENSKYLKRNHKRT. A helical; Signal-anchor for type II membrane protein transmembrane segment spans residues 33 to 53; the sequence is IKICAYAITTFALFFIVVVYF. Residues 54–519 lie on the Lumenal side of the membrane; it reads KNQTNVNDAN…IGIDVFFPIL (466 aa). 2 N-linked (GlcNAc...) asparagine glycosylation sites follow: Asn-55 and Asn-143. 4 cysteine pairs are disulfide-bonded: Cys-298–Cys-340, Cys-333–Cys-373, Cys-358–Cys-378, and Cys-427–Cys-508. The active site involves Cys-301. N-linked (GlcNAc...) asparagine glycosylation occurs at Asn-432. Residues His-433 and Asn-483 contribute to the active site.

The protein belongs to the peptidase C1 family.

The protein resides in the membrane. In terms of biological role, cysteine protease. Required for host hepatocyte-derived merozoite infectivity and to a lesser extent for host erythrocyte-derived merozoite infectivity. The protein is Berghepain-1 of Plasmodium berghei (strain Anka).